The primary structure comprises 234 residues: Sugar fermentation stimulation protein homolog (234 aa).

The protein belongs to the SfsA family.

The polypeptide is Sugar fermentation stimulation protein homolog (Shewanella sp. (strain MR-7)).